A 402-amino-acid chain; its full sequence is MPDIGLEEVEVTEILVKIGEEIKLDQGLITVEGDKASMEIPSPISGIVKDITIKIGEKVKTSSIIMIFKVNNLNSIKNEKDLNYIKTEKKLNENFLEEKKDIKKIVLVHATPVVRRLARHLNVDLKNITPSGPKNRILKEDIELYIRNNTSNKSSFNIEKNNTTNFHKDLFNEIPITNIQQIIGKNLHQNWVNIPHVTQFDEVNITLLEEFRHKYNTEKKQKNNMCSKITILPFIIKSVAYGLLEFPIFNSSLSVNKKTIFLKKYVNVGIAVDVQNALFVPVLKNVDKKNIANLSSELIFLSKKAHENKLDASDMKDGCFTISNLGGIGGSWFSPIINSPEVAILGVSKALIKPLWNGKEFIPSLMLPLSLSYDHRVINGADAARFLTFIGKMLSDIRFLIM.

In terms of domain architecture, Lipoyl-binding spans methionine 1–lysine 69. Lysine 35 carries the post-translational modification N6-lipoyllysine. The Peripheral subunit-binding (PSBD) domain maps to histidine 109–isoleucine 146. Residue histidine 375 is part of the active site.

It belongs to the 2-oxoacid dehydrogenase family. As to quaternary structure, forms a 24-polypeptide structural core with octahedral symmetry. (R)-lipoate is required as a cofactor.

It catalyses the reaction N(6)-[(R)-dihydrolipoyl]-L-lysyl-[protein] + acetyl-CoA = N(6)-[(R)-S(8)-acetyldihydrolipoyl]-L-lysyl-[protein] + CoA. The pyruvate dehydrogenase complex catalyzes the overall conversion of pyruvate to acetyl-CoA and CO(2). It contains multiple copies of three enzymatic components: pyruvate dehydrogenase (E1), dihydrolipoamide acetyltransferase (E2) and lipoamide dehydrogenase (E3). This is Dihydrolipoyllysine-residue acetyltransferase component of pyruvate dehydrogenase complex (aceF) from Buchnera aphidicola subsp. Schizaphis graminum (strain Sg).